An 89-amino-acid polypeptide reads, in one-letter code: Small ribosomal subunit protein bS20 (89 aa).

The span at 1–11 (MANIKSQIKRN) shows a compositional bias: polar residues. The segment at 1 to 22 (MANIKSQIKRNLTNEKRRLRNK) is disordered.

The protein belongs to the bacterial ribosomal protein bS20 family.

Functionally, binds directly to 16S ribosomal RNA. The chain is Small ribosomal subunit protein bS20 from Frankia casuarinae (strain DSM 45818 / CECT 9043 / HFP020203 / CcI3).